Reading from the N-terminus, the 205-residue chain is Meiotic nuclear division protein 1 homolog (205 aa).

Ser2 carries the post-translational modification N-acetylserine. Positions Lys83 to Ile173 form a coiled coil.

The protein belongs to the MND1 family. Heterodimer with PSMC3IP/HOP2. MND1-PSMC3IP interacts with DMC1 and RAD51 and binds preferentially to dsDNA.

It is found in the nucleus. Required for proper homologous chromosome pairing and efficient cross-over and intragenic recombination during meiosis. Stimulates both DMC1- and RAD51-mediated homologous strand assimilation, which is required for the resolution of meiotic double-strand breaks. The sequence is that of Meiotic nuclear division protein 1 homolog from Bos taurus (Bovine).